A 135-amino-acid chain; its full sequence is Cytochrome b5, seed isoform (135 aa).

The Cytochrome b5 heme-binding domain occupies 5–81; sequence SKVFTLAEVS…LDEYYVGDID (77 aa). 2 residues coordinate heme: histidine 40 and histidine 64. A helical transmembrane segment spans residues 107–127; the sequence is FIVKLLQFLVPLIILGVAFGV.

This sequence belongs to the cytochrome b5 family. As to expression, specifically expressed in developing seeds.

The protein resides in the endoplasmic reticulum membrane. The protein localises to the microsome membrane. Its function is as follows. Cytochrome b5 is a membrane bound hemoprotein which function as an electron carrier for several membrane bound oxygenases. May play a key role in the modification by desaturation of fatty acids in the endoplasmic reticulum, which in the developing seed is utilized for membrane synthesis and in the developmentally regulated production of large amounts of storage lipids. This Nicotiana tabacum (Common tobacco) protein is Cytochrome b5, seed isoform.